Reading from the N-terminus, the 251-residue chain is Ubiquinone/menaquinone biosynthesis C-methyltransferase UbiE (251 aa).

Residues Thr74, Asp95, 123–124 (NA), and Ser140 contribute to the S-adenosyl-L-methionine site.

Belongs to the class I-like SAM-binding methyltransferase superfamily. MenG/UbiE family.

It catalyses the reaction a 2-demethylmenaquinol + S-adenosyl-L-methionine = a menaquinol + S-adenosyl-L-homocysteine + H(+). The enzyme catalyses a 2-methoxy-6-(all-trans-polyprenyl)benzene-1,4-diol + S-adenosyl-L-methionine = a 5-methoxy-2-methyl-3-(all-trans-polyprenyl)benzene-1,4-diol + S-adenosyl-L-homocysteine + H(+). It participates in quinol/quinone metabolism; menaquinone biosynthesis; menaquinol from 1,4-dihydroxy-2-naphthoate: step 2/2. Its pathway is cofactor biosynthesis; ubiquinone biosynthesis. Functionally, methyltransferase required for the conversion of demethylmenaquinol (DMKH2) to menaquinol (MKH2) and the conversion of 2-polyprenyl-6-methoxy-1,4-benzoquinol (DDMQH2) to 2-polyprenyl-3-methyl-6-methoxy-1,4-benzoquinol (DMQH2). This Serratia proteamaculans (strain 568) protein is Ubiquinone/menaquinone biosynthesis C-methyltransferase UbiE.